Here is a 193-residue protein sequence, read N- to C-terminus: Holliday junction branch migration complex subunit RuvA (193 aa).

Residues 1–64 form a domain I region; sequence MIGRIAGILL…EDANLLYGFL (64 aa). The interval 65–139 is domain II; that stretch reads TPQERTTFRE…GKLGADLGEL (75 aa). Residues 139–143 are flexible linker; sequence LAGAA. Residues 144-193 are domain III; it reads SPSDHATDILNALLALGYSEKEGLAAIKNVPAGTGVSEGIKLALKALSKV.

This sequence belongs to the RuvA family. Homotetramer. Forms an RuvA(8)-RuvB(12)-Holliday junction (HJ) complex. HJ DNA is sandwiched between 2 RuvA tetramers; dsDNA enters through RuvA and exits via RuvB. An RuvB hexamer assembles on each DNA strand where it exits the tetramer. Each RuvB hexamer is contacted by two RuvA subunits (via domain III) on 2 adjacent RuvB subunits; this complex drives branch migration. In the full resolvosome a probable DNA-RuvA(4)-RuvB(12)-RuvC(2) complex forms which resolves the HJ.

The protein resides in the cytoplasm. Its function is as follows. The RuvA-RuvB-RuvC complex processes Holliday junction (HJ) DNA during genetic recombination and DNA repair, while the RuvA-RuvB complex plays an important role in the rescue of blocked DNA replication forks via replication fork reversal (RFR). RuvA specifically binds to HJ cruciform DNA, conferring on it an open structure. The RuvB hexamer acts as an ATP-dependent pump, pulling dsDNA into and through the RuvAB complex. HJ branch migration allows RuvC to scan DNA until it finds its consensus sequence, where it cleaves and resolves the cruciform DNA. In Burkholderia lata (strain ATCC 17760 / DSM 23089 / LMG 22485 / NCIMB 9086 / R18194 / 383), this protein is Holliday junction branch migration complex subunit RuvA.